Reading from the N-terminus, the 76-residue chain is Small ribosomal subunit protein uS17 (76 aa).

Belongs to the universal ribosomal protein uS17 family. Part of the 30S ribosomal subunit.

In terms of biological role, one of the primary rRNA binding proteins, it binds specifically to the 5'-end of 16S ribosomal RNA. This is Small ribosomal subunit protein uS17 from Dinoroseobacter shibae (strain DSM 16493 / NCIMB 14021 / DFL 12).